Consider the following 40-residue polypeptide: uncharacterized protein (40 aa).

This is an uncharacterized protein from Sulfolobus acidocaldarius (strain ATCC 33909 / DSM 639 / JCM 8929 / NBRC 15157 / NCIMB 11770).